A 491-amino-acid chain; its full sequence is Lysine--tRNA ligase (491 aa).

Mg(2+) is bound by residues glutamate 399 and glutamate 406.

It belongs to the class-II aminoacyl-tRNA synthetase family. Homodimer. Mg(2+) is required as a cofactor.

It is found in the cytoplasm. It carries out the reaction tRNA(Lys) + L-lysine + ATP = L-lysyl-tRNA(Lys) + AMP + diphosphate. The polypeptide is Lysine--tRNA ligase (Chloroflexus aurantiacus (strain ATCC 29366 / DSM 635 / J-10-fl)).